The sequence spans 357 residues: UDP-N-acetylglucosamine--N-acetylmuramyl-(pentapeptide) pyrophosphoryl-undecaprenol N-acetylglucosamine transferase (357 aa).

UDP-N-acetyl-alpha-D-glucosamine-binding positions include 15 to 17 (TGG), asparagine 124, arginine 165, serine 194, and glutamine 288.

The protein belongs to the glycosyltransferase 28 family. MurG subfamily.

It localises to the cell inner membrane. The catalysed reaction is di-trans,octa-cis-undecaprenyl diphospho-N-acetyl-alpha-D-muramoyl-L-alanyl-D-glutamyl-meso-2,6-diaminopimeloyl-D-alanyl-D-alanine + UDP-N-acetyl-alpha-D-glucosamine = di-trans,octa-cis-undecaprenyl diphospho-[N-acetyl-alpha-D-glucosaminyl-(1-&gt;4)]-N-acetyl-alpha-D-muramoyl-L-alanyl-D-glutamyl-meso-2,6-diaminopimeloyl-D-alanyl-D-alanine + UDP + H(+). It functions in the pathway cell wall biogenesis; peptidoglycan biosynthesis. Cell wall formation. Catalyzes the transfer of a GlcNAc subunit on undecaprenyl-pyrophosphoryl-MurNAc-pentapeptide (lipid intermediate I) to form undecaprenyl-pyrophosphoryl-MurNAc-(pentapeptide)GlcNAc (lipid intermediate II). This chain is UDP-N-acetylglucosamine--N-acetylmuramyl-(pentapeptide) pyrophosphoryl-undecaprenol N-acetylglucosamine transferase, found in Trichormus variabilis (strain ATCC 29413 / PCC 7937) (Anabaena variabilis).